The primary structure comprises 91 residues: Elongation factor 1-beta (91 aa).

The protein belongs to the EF-1-beta/EF-1-delta family.

Its function is as follows. Promotes the exchange of GDP for GTP in EF-1-alpha/GDP, thus allowing the regeneration of EF-1-alpha/GTP that could then be used to form the ternary complex EF-1-alpha/GTP/AAtRNA. The chain is Elongation factor 1-beta from Sulfurisphaera tokodaii (strain DSM 16993 / JCM 10545 / NBRC 100140 / 7) (Sulfolobus tokodaii).